The primary structure comprises 136 residues: Glutaredoxin-C8 (136 aa).

In terms of domain architecture, Glutaredoxin spans 33–135 (SSFVKSTVKA…KLLNIDVKED (103 aa)). Cys53 and Cys56 are disulfide-bonded.

Belongs to the glutaredoxin family. CPYC subfamily.

It localises to the cytoplasm. Its function is as follows. Has a glutathione-disulfide oxidoreductase activity in the presence of NADPH and glutathione reductase. Reduces low molecular weight disulfides and proteins. The chain is Glutaredoxin-C8 (GRXC8) from Oryza sativa subsp. japonica (Rice).